A 310-amino-acid chain; its full sequence is Malate dehydrogenase (310 aa).

NAD(+) is bound by residues 7–12 (GAGNVG) and D32. Residues R81 and R87 each coordinate substrate. NAD(+) contacts are provided by residues N94 and 117–119 (VSN). N119 and R150 together coordinate substrate. H174 acts as the Proton acceptor in catalysis.

This sequence belongs to the LDH/MDH superfamily. MDH type 3 family.

The catalysed reaction is (S)-malate + NAD(+) = oxaloacetate + NADH + H(+). Catalyzes the reversible oxidation of malate to oxaloacetate. This is Malate dehydrogenase from Chlorobium luteolum (strain DSM 273 / BCRC 81028 / 2530) (Pelodictyon luteolum).